Reading from the N-terminus, the 476-residue chain is MKILYISVECFPFIKTGGLGDVAYSFPKTLKKLGNDIKVFLIYSDSISEKYKEKMRSAYFFSLDLNGKSFPVEIFSLVMDDIEYLFFNDPSFKNIERTAYLDLHENSTFYLIFNKAISKFLELSAFKPEIIHANDWHTGILPLFLSGEKNENSKLKVVFTIHNLQYQGVFGASNVLKYLNEKERSNSLLSEIISNDIFNFMKAGIISSDIVTTVSETYKEEIKQPMQGMGLESVLNKYNSKLRGIINGLDYDIFNPSIDKYIEAKYDVSNYKEAKLINKIALQKELNLEQNKKIFLIGMISRLANQKGIDLVLNSLWNIVKDNDIQFVVLGTGDVNYESNLKSFGNKYPRNFKFINKFSDELSHKLYAGLDAFLIPSLFEPCGLTQLISLKYGCIPIARATGGLIDTITSYNDKQENANGFLFKEYTPEALYKSVKLAKNLFYNNKPEWNKLIYFGMDQRFGWEEIAKKYLESIYK.

K15 contacts ADP-alpha-D-glucose.

It belongs to the glycosyltransferase 1 family. Bacterial/plant glycogen synthase subfamily.

It carries out the reaction [(1-&gt;4)-alpha-D-glucosyl](n) + ADP-alpha-D-glucose = [(1-&gt;4)-alpha-D-glucosyl](n+1) + ADP + H(+). The protein operates within glycan biosynthesis; glycogen biosynthesis. In terms of biological role, synthesizes alpha-1,4-glucan chains using ADP-glucose. The protein is Glycogen synthase of Mycoplasma mobile (strain ATCC 43663 / 163K / NCTC 11711) (Mesomycoplasma mobile).